The sequence spans 185 residues: Elongation factor P (185 aa).

It belongs to the elongation factor P family.

The protein resides in the cytoplasm. Its pathway is protein biosynthesis; polypeptide chain elongation. In terms of biological role, involved in peptide bond synthesis. Stimulates efficient translation and peptide-bond synthesis on native or reconstituted 70S ribosomes in vitro. Probably functions indirectly by altering the affinity of the ribosome for aminoacyl-tRNA, thus increasing their reactivity as acceptors for peptidyl transferase. This Petrotoga mobilis (strain DSM 10674 / SJ95) protein is Elongation factor P.